The primary structure comprises 322 residues: Extracellular metalloprotease AFUB_008060 (322 aa).

An N-terminal signal peptide occupies residues 1–22 (MLPFNSCVYVLLIISLMSNCRA). N-linked (GlcNAc...) asparagine glycans are attached at residues N123 and N197. Position 233 (H233) interacts with Zn(2+). E234 is a catalytic residue. Residue H237 participates in Zn(2+) binding. Cysteines 272 and 299 form a disulfide.

This sequence belongs to the peptidase M43B family.

It is found in the secreted. Functionally, secreted metalloproteinase that allows assimilation of proteinaceous substrates. Plays a pivotal role as a pathogenicity determinant during infections and contributes to the ability of the pathogen to persist within the mammalian host. This Aspergillus fumigatus (strain CBS 144.89 / FGSC A1163 / CEA10) (Neosartorya fumigata) protein is Extracellular metalloprotease AFUB_008060.